The chain runs to 311 residues: 4-hydroxy-tetrahydrodipicolinate synthase (311 aa).

Residue threonine 49 coordinates pyruvate. The active-site Proton donor/acceptor is tyrosine 138. Lysine 166 (schiff-base intermediate with substrate) is an active-site residue. Valine 207 is a pyruvate binding site.

This sequence belongs to the DapA family. Homotetramer; dimer of dimers.

It localises to the cytoplasm. The catalysed reaction is L-aspartate 4-semialdehyde + pyruvate = (2S,4S)-4-hydroxy-2,3,4,5-tetrahydrodipicolinate + H2O + H(+). The protein operates within amino-acid biosynthesis; L-lysine biosynthesis via DAP pathway; (S)-tetrahydrodipicolinate from L-aspartate: step 3/4. Functionally, catalyzes the condensation of (S)-aspartate-beta-semialdehyde [(S)-ASA] and pyruvate to 4-hydroxy-tetrahydrodipicolinate (HTPA). In Lactobacillus helveticus (strain DPC 4571), this protein is 4-hydroxy-tetrahydrodipicolinate synthase.